Reading from the N-terminus, the 329-residue chain is Oligopeptide transport ATP-binding protein AppF (329 aa).

The ABC transporter domain maps to 10–261; that stretch reads LELRDVKKYF…PLHPYTQALL (252 aa). An ATP-binding site is contributed by 53–60; it reads GESGCGKS.

Belongs to the ABC transporter superfamily.

The protein resides in the cell membrane. Functionally, this protein is a component of an oligopeptide permease, a binding protein-dependent transport system. This APP system can completely substitute for the OPP system in both sporulation and genetic competence, though, unlike OPP, is incapable of transporting tripeptides. Probably responsible for energy coupling to the transport system. The sequence is that of Oligopeptide transport ATP-binding protein AppF (appF) from Bacillus subtilis (strain 168).